The following is a 192-amino-acid chain: Large ribosomal subunit protein uL3 (192 aa).

It belongs to the universal ribosomal protein uL3 family. In terms of assembly, part of the 50S ribosomal subunit. Forms a cluster with proteins L14 and L19.

One of the primary rRNA binding proteins, it binds directly near the 3'-end of the 23S rRNA, where it nucleates assembly of the 50S subunit. This chain is Large ribosomal subunit protein uL3 (rplC), found in Helicobacter hepaticus (strain ATCC 51449 / 3B1).